The primary structure comprises 387 residues: Alkanesulfonate monooxygenase (387 aa).

It belongs to the SsuD family.

It catalyses the reaction an alkanesulfonate + FMNH2 + O2 = an aldehyde + FMN + sulfite + H2O + 2 H(+). Its function is as follows. Catalyzes the desulfonation of aliphatic sulfonates. The protein is Alkanesulfonate monooxygenase of Ralstonia pickettii (strain 12J).